Here is a 231-residue protein sequence, read N- to C-terminus: 7-cyano-7-deazaguanine synthase (231 aa).

An ATP-binding site is contributed by 8–18 (FSGGQDSTTCL). Zn(2+)-binding residues include Cys-188, Cys-197, Cys-200, and Cys-203.

The protein belongs to the QueC family. Zn(2+) is required as a cofactor.

The enzyme catalyses 7-carboxy-7-deazaguanine + NH4(+) + ATP = 7-cyano-7-deazaguanine + ADP + phosphate + H2O + H(+). It participates in purine metabolism; 7-cyano-7-deazaguanine biosynthesis. In terms of biological role, catalyzes the ATP-dependent conversion of 7-carboxy-7-deazaguanine (CDG) to 7-cyano-7-deazaguanine (preQ(0)). The protein is 7-cyano-7-deazaguanine synthase of Sodalis glossinidius (strain morsitans).